The chain runs to 247 residues: MNGRADFREPNAQVSRPIPDIGGGYIPTEEEWRLFAECHEECFWFRSVPLAATSMLITQGLISKGILSSHPKYGSIPKLLFACIVGYFAGKLSYVKTCQEKFKKLENSPLGEALRSGELRRSSPPGHYTQKPKFDSNVSGQSSFGTSPAADNIEKEALPRYEPIPFSASMNESTPTGITDHIAQGPEPNLEESPKRKGVTYEELRSKNRESYGVTLPHKTDPSVRPMQERVPKKEVKVNKYGDTWDE.

Positions M1–E112 constitute an OCIA domain. Phosphoserine occurs at positions 108, 116, and 123. Disordered stretches follow at residues A113–I153 and S167–R230. Composition is skewed to polar residues over residues S136–T146 and A168–G177. Basic and acidic residues-rich tracts occupy residues E192–E210 and H218–R230. S193 bears the Phosphoserine mark.

The protein belongs to the OCIAD1 family. In terms of assembly, interacts with OCIAD2. Interacts with STAT3. As to expression, expressed at high levels in the brain and at lower levels in the heart, ovary, testis and kidney. Expression is strongest in embryonic stem cells and in the blood vessels.

Its subcellular location is the endosome. Its function is as follows. Maintains stem cell potency. Increases STAT3 phosphorylation and controls ERK phosphorylation. May act as a scaffold, increasing STAT3 recruitment onto endosomes. In Mus musculus (Mouse), this protein is OCIA domain-containing protein 1.